The chain runs to 295 residues: 4-hydroxy-tetrahydrodipicolinate synthase (295 aa).

Thr46 lines the pyruvate pocket. The Proton donor/acceptor role is filled by Tyr134. Lys162 serves as the catalytic Schiff-base intermediate with substrate. Ile205 provides a ligand contact to pyruvate.

Belongs to the DapA family. Homotetramer; dimer of dimers.

The protein localises to the cytoplasm. The catalysed reaction is L-aspartate 4-semialdehyde + pyruvate = (2S,4S)-4-hydroxy-2,3,4,5-tetrahydrodipicolinate + H2O + H(+). Its pathway is amino-acid biosynthesis; L-lysine biosynthesis via DAP pathway; (S)-tetrahydrodipicolinate from L-aspartate: step 3/4. Catalyzes the condensation of (S)-aspartate-beta-semialdehyde [(S)-ASA] and pyruvate to 4-hydroxy-tetrahydrodipicolinate (HTPA). The chain is 4-hydroxy-tetrahydrodipicolinate synthase from Anaeromyxobacter dehalogenans (strain 2CP-C).